The following is a 361-amino-acid chain: Putative agmatine deiminase (361 aa).

Cys354 (amidino-cysteine intermediate) is an active-site residue.

This sequence belongs to the agmatine deiminase family.

It carries out the reaction agmatine + H2O = N-carbamoylputrescine + NH4(+). This chain is Putative agmatine deiminase, found in Streptococcus pneumoniae (strain P1031).